The primary structure comprises 405 residues: Argininosuccinate synthase (405 aa).

11 to 19 lines the ATP pocket; the sequence is AYSGGLDTS. Residue Y90 coordinates L-citrulline. G119 is an ATP binding site. Positions 121, 125, and 126 each coordinate L-aspartate. Position 125 (N125) interacts with L-citrulline. 5 residues coordinate L-citrulline: R129, S178, S187, E263, and Y275.

This sequence belongs to the argininosuccinate synthase family. Type 1 subfamily. As to quaternary structure, homotetramer.

The protein resides in the cytoplasm. It carries out the reaction L-citrulline + L-aspartate + ATP = 2-(N(omega)-L-arginino)succinate + AMP + diphosphate + H(+). Its pathway is amino-acid biosynthesis; L-arginine biosynthesis; L-arginine from L-ornithine and carbamoyl phosphate: step 2/3. The sequence is that of Argininosuccinate synthase from Legionella pneumophila (strain Corby).